Reading from the N-terminus, the 290-residue chain is MSARIIDGKTIAQTIRSEVAEKVKQRIKIGKRAPGLAVILVGDNPASQIYVASKRKACDEVGFISRSYDLPDTTSEADLLNLIDTLNEDNTIDGILVQLPLPAGIDNVKVLERIHPDKDVDGFHPYNIGRLCQRAPKLRPCTPRGIVTLLERCNIPMNGLNAVIIGASNIVGRPMSLELLLAGCTTTVTHRFTKDLRFHVEHADLVVVAVGKPNFIPGEWIKPGAIVIDVGINRLENGKVVGDVDFAQASQRAGWISPVPGGVGPMTVATLIQNTLQACEEYHDPDIGNN.

NADP(+)-binding positions include 166-168 (GAS) and Ile232.

The protein belongs to the tetrahydrofolate dehydrogenase/cyclohydrolase family. As to quaternary structure, homodimer.

The catalysed reaction is (6R)-5,10-methylene-5,6,7,8-tetrahydrofolate + NADP(+) = (6R)-5,10-methenyltetrahydrofolate + NADPH. It catalyses the reaction (6R)-5,10-methenyltetrahydrofolate + H2O = (6R)-10-formyltetrahydrofolate + H(+). The protein operates within one-carbon metabolism; tetrahydrofolate interconversion. In terms of biological role, catalyzes the oxidation of 5,10-methylenetetrahydrofolate to 5,10-methenyltetrahydrofolate and then the hydrolysis of 5,10-methenyltetrahydrofolate to 10-formyltetrahydrofolate. This Proteus mirabilis (strain HI4320) protein is Bifunctional protein FolD.